The chain runs to 110 residues: Flagellar hook-basal body complex protein FliE (110 aa).

Belongs to the FliE family.

The protein localises to the bacterial flagellum basal body. The protein is Flagellar hook-basal body complex protein FliE of Pseudomonas entomophila (strain L48).